The chain runs to 181 residues: Acireductone dioxygenase (181 aa).

The Fe(2+) site is built by H100, H102, E106, and H145. 4 residues coordinate Ni(2+): H100, H102, E106, and H145.

Belongs to the acireductone dioxygenase (ARD) family. As to quaternary structure, monomer. It depends on Fe(2+) as a cofactor. Requires Ni(2+) as cofactor.

It catalyses the reaction 1,2-dihydroxy-5-(methylsulfanyl)pent-1-en-3-one + O2 = 3-(methylsulfanyl)propanoate + CO + formate + 2 H(+). The enzyme catalyses 1,2-dihydroxy-5-(methylsulfanyl)pent-1-en-3-one + O2 = 4-methylsulfanyl-2-oxobutanoate + formate + 2 H(+). It functions in the pathway amino-acid biosynthesis; L-methionine biosynthesis via salvage pathway; L-methionine from S-methyl-5-thio-alpha-D-ribose 1-phosphate: step 5/6. Its function is as follows. Catalyzes 2 different reactions between oxygen and the acireductone 1,2-dihydroxy-3-keto-5-methylthiopentene (DHK-MTPene) depending upon the metal bound in the active site. Fe-containing acireductone dioxygenase (Fe-ARD) produces formate and 2-keto-4-methylthiobutyrate (KMTB), the alpha-ketoacid precursor of methionine in the methionine recycle pathway. Ni-containing acireductone dioxygenase (Ni-ARD) produces methylthiopropionate, carbon monoxide and formate, and does not lie on the methionine recycle pathway. The chain is Acireductone dioxygenase from Trichodesmium erythraeum (strain IMS101).